Here is a 227-residue protein sequence, read N- to C-terminus: MKFFVALALFACLGSLALAKDDEYCQNTVITACSTSAFSANSICNARFAGIDHIEPEIQSYINANLAKSYDYLLLATHFNSYQKNRPGFQKLYQGLSDRSFEDSIALIKQVTRRGGIVDFNTRHESSGSVSTKRGTLEVDELHSLALALDTEKQLATGATHVHSRATHATDAERDPELAHYFEENFLGKQAESVRKLSGYANDLAKLMKVPDPSLSVYLFDEYLQKQ.

The N-terminal stretch at 1 to 19 (MKFFVALALFACLGSLALA) is a signal peptide. A disulfide bond links C25 and C44. A Ferritin-like diiron domain is found at 48–208 (FAGIDHIEPE…GYANDLAKLM (161 aa)).

Belongs to the ferritin family. Oligomer of 12 light (L) chains and 12 heavy (H) chains; L and H chains are disulfide-linked. The functional molecule forms a roughly spherical shell with a diameter of 12 nm and contains a central cavity into which the insoluble ferric iron core is deposited. As to expression, expressed in hemolymph, gut, ovaries and to a lesser extent in testes (at protein level). Expressed in the head (at protein level).

Its subcellular location is the golgi apparatus. The protein resides in the secreted. Functionally, stores iron in a soluble, non-toxic, readily available form. Important for iron homeostasis. Iron is taken up in the ferrous form and deposited as ferric hydroxides after oxidation. Ferritin is composed of a heavy (H) chain which is responsible for the oxidation and uptake of ferrous iron, and a light (L) chain which facilitates the nucleation of the ferrihydrite iron core. Required for dietary iron absorption in the midgut. Involved in tissue iron detoxification by exporting excess iron. Plays a role in the maintenance of circadian rhythms. Required for embryo and larval development. This is Ferritin light chain from Drosophila melanogaster (Fruit fly).